The chain runs to 285 residues: Protease HtpX homolog (285 aa).

2 helical membrane-spanning segments follow: residues 7 to 27 (TAMLMAGITALFIVIGGMIGG) and 30 to 50 (GMTIALLFALAMNFFSYWFSD). Residue His-131 participates in Zn(2+) binding. Glu-132 is an active-site residue. His-135 serves as a coordination point for Zn(2+). A run of 2 helical transmembrane segments spans residues 146-166 (ITATMAGAISALANFAMFFGG) and 177-197 (IAGIAVALLAPIAGALIQMAI). A Zn(2+)-binding site is contributed by Glu-202.

This sequence belongs to the peptidase M48B family. Requires Zn(2+) as cofactor.

Its subcellular location is the cell inner membrane. The polypeptide is Protease HtpX homolog (Burkholderia ambifaria (strain MC40-6)).